We begin with the raw amino-acid sequence, 311 residues long: MKAKRRILLQLLTFCLFLLLLAKIHFRNHQEEELLLSDWFNPRRRLDVITTTDWLAPIIWEGTFDRKVLETYFRKQNITVGLAVFAVGSLTDKYLDPFLQSASKFFMPGYRVIFYIMVDKYLQLQEMEHNPLQSFQVLKIGKERWWSNFDLMRMKILSEHIRDHIRYEVDFLFSMNINMVFQSEFGVETLSTSVAQLHPWWYFRKRTNLPYERKPTSVAHIPFGLGDFYYAGAIIGGVPFQVLDFAQQYLKGVFLDTENGVNSTYEKYLNKYFFLNKPTKLLSPEYSWDPTFNLPRHVWFVKIAHHPIDTL.

At 1 to 5 the chain is on the cytoplasmic side; the sequence is MKAKR. A helical; Signal-anchor for type II membrane protein membrane pass occupies residues 6 to 26; it reads RILLQLLTFCLFLLLLAKIHF. Residues 27–311 lie on the Lumenal side of the membrane; it reads RNHQEEELLL…KIAHHPIDTL (285 aa). The N-linked (GlcNAc...) asparagine glycan is linked to N77. Residues 85–90, 176–178, and 198–201 each bind substrate; these read FAVGSL, NIN, and HPWW. E266 serves as the catalytic Nucleophile.

Belongs to the glycosyltransferase 6 family. It depends on Mn(2+) as a cofactor.

The protein resides in the membrane. This chain is Glycosyltransferase 6 domain-containing protein 1 (Glt6d1), found in Mus musculus (Mouse).